The sequence spans 801 residues: Cadherin-20 (801 aa).

An N-terminal signal peptide occupies residues 1–34 (MWTTGRMSNAKSWLGLGTSLYFWALMDLTATVLS). Residues 35–59 (STPMPEVELETLFSGRSQSHQRSKR) constitute a propeptide that is removed on maturation. The Extracellular portion of the chain corresponds to 60 to 619 (SWVWNQFFVL…AYLLPVSLSR (560 aa)). Cadherin domains are found at residues 61–165 (WVWN…EPKF), 166–274 (LDGP…PPRF), 275–389 (PQKH…PPVF), 390–494 (EPGF…APEF), and 494–610 (FPRF…SPEA). Asn-261 carries N-linked (GlcNAc...) asparagine glycosylation. Residues Asn-420, Asn-461, and Asn-542 are each glycosylated (N-linked (GlcNAc...) asparagine). The helical transmembrane segment at 620 to 640 (GALIAILACIFVLLVLVLLIL) threads the bilayer. The Cytoplasmic portion of the chain corresponds to 641-801 (SMRRHRKQPY…GASEGPAPLW (161 aa)).

Expressed in brain. Highest level of expression in the retina. In embryo it is synthesized by the forebrain, anterior neural ridge, developing visual system, primitive external granular layer of the cerebellum and a subset of neural crest cells likely to develop into melanoblasts.

The protein resides in the cell membrane. Cadherins are calcium-dependent cell adhesion proteins. They preferentially interact with themselves in a homophilic manner in connecting cells; cadherins may thus contribute to the sorting of heterogeneous cell types. This chain is Cadherin-20 (Cdh20), found in Mus musculus (Mouse).